A 51-amino-acid chain; its full sequence is ATP synthase protein 8 (51 aa).

Residues Leu7–Leu27 traverse the membrane as a helical segment.

It belongs to the ATPase protein 8 family. As to quaternary structure, F-type ATPases have 2 components, CF(1) - the catalytic core - and CF(0) - the membrane proton channel.

Its subcellular location is the mitochondrion membrane. Functionally, mitochondrial membrane ATP synthase (F(1)F(0) ATP synthase or Complex V) produces ATP from ADP in the presence of a proton gradient across the membrane which is generated by electron transport complexes of the respiratory chain. F-type ATPases consist of two structural domains, F(1) - containing the extramembraneous catalytic core and F(0) - containing the membrane proton channel, linked together by a central stalk and a peripheral stalk. During catalysis, ATP synthesis in the catalytic domain of F(1) is coupled via a rotary mechanism of the central stalk subunits to proton translocation. Part of the complex F(0) domain. Minor subunit located with subunit a in the membrane. The protein is ATP synthase protein 8 (MT-ATP8) of Limulus polyphemus (Atlantic horseshoe crab).